Reading from the N-terminus, the 921-residue chain is Protein translocase subunit SecA (921 aa).

Residues Q86, 104–108 (GEGKT), and D512 contribute to the ATP site. Positions 905, 907, 916, and 917 each coordinate Zn(2+).

It belongs to the SecA family. In terms of assembly, monomer and homodimer. Part of the essential Sec protein translocation apparatus which comprises SecA, SecYEG and auxiliary proteins SecDF-YajC and YidC. It depends on Zn(2+) as a cofactor.

It localises to the cell inner membrane. It is found in the cytoplasm. The enzyme catalyses ATP + H2O + cellular proteinSide 1 = ADP + phosphate + cellular proteinSide 2.. Functionally, part of the Sec protein translocase complex. Interacts with the SecYEG preprotein conducting channel. Has a central role in coupling the hydrolysis of ATP to the transfer of proteins into and across the cell membrane, serving both as a receptor for the preprotein-SecB complex and as an ATP-driven molecular motor driving the stepwise translocation of polypeptide chains across the membrane. The chain is Protein translocase subunit SecA from Caulobacter sp. (strain K31).